The following is a 420-amino-acid chain: E3 ubiquitin protein ligase DRIP2 (420 aa).

The RING-type zinc-finger motif lies at 20 to 61 (CPLCDKLLRDATTISECLHTFCRKCIYEKITEDEIESCPVCD). Positions 113–123 (ISSLVVSTPRV) are enriched in polar residues. Disordered regions lie at residues 113–201 (ISSL…KDVD) and 226–289 (DPKS…TFGD). The segment covering 154–165 (KKEEEFGDDHVE) has biased composition (basic and acidic residues). Composition is skewed to polar residues over residues 166–194 (SASS…SLSN) and 232–242 (GNASHNDVQGS). A compositionally biased stretch (basic residues) spans 244-253 (TKTKDHKRKC). Over residues 260 to 273 (SNNGDPTTSETATL) the composition is skewed to polar residues. Over residues 274 to 284 (KRTRRTRRKRS) the composition is skewed to basic residues.

Interacts with DREB2A. In terms of processing, auto-ubiquitinated. Expressed in roots, leaves and flowers.

The enzyme catalyses S-ubiquitinyl-[E2 ubiquitin-conjugating enzyme]-L-cysteine + [acceptor protein]-L-lysine = [E2 ubiquitin-conjugating enzyme]-L-cysteine + N(6)-ubiquitinyl-[acceptor protein]-L-lysine.. It functions in the pathway protein modification; protein ubiquitination. Its function is as follows. E3 ubiquitin-protein ligase that acts as a negative regulator of the response to water stress. Mediates ubiquitination and subsequent proteasomal degradation of the drought-induced transcriptional activator DREB2A. Functionally redundant with DRIP1. This is E3 ubiquitin protein ligase DRIP2 (DRIP2) from Arabidopsis thaliana (Mouse-ear cress).